A 214-amino-acid chain; its full sequence is uncharacterized protein (214 aa).

The Response regulatory domain occupies 2–118 (KIVIADDHHV…ELVKTRQVHG (117 aa)). Aspartate 53 carries the post-translational modification 4-aspartylphosphate. Residues 142–207 (EKEKYYQLTR…QAALFAVKYN (66 aa)) form the HTH luxR-type domain. Residues 166–185 (NKEIAAALFISEKTVKTHVS) constitute a DNA-binding region (H-T-H motif).

Post-translationally, phosphorylated by YhcY.

Its subcellular location is the cytoplasm. Member of the two-component regulatory system YhcY/YhcZ. This is an uncharacterized protein from Bacillus subtilis (strain 168).